The sequence spans 901 residues: MRAMDTQVQSAERGLVLPPMNSTVSSATAATTATNTDTDTDGDRDEERESLAEDGSEWVPAYMLTRDRSRYLGHFLGVDKMLEAVKCKYCGVIIRRQGNSISMAEASQTHLWSTHKIDPNANYYSGWTGVEAGSTFMVRPPLKNHQGGSATTNSIANLLEIDEDFLKRTREKEMALPLVQSLAIIIASENLPLSFVDNTAVRLLINQNANSLSFIDHDLILNAIRSIAYNLDRIIQRTALRNNSDLSLIIDKNYLLMDPTDRSNQLSNRLKNQLFEMQKINFFSLSHSVWNNTISILSIQYYDDFHSQVKTLPLIIQNLHEYNNDPKLSIPAQLLKISQELPGLQNTVISITLPRSQIVDLLNVMDSQPFFPNTYTNAKNYYHNCIISIINSAILPLFGTPKSADITHPRQSSFSKEPLTLLDSLIDLSNIDISNSIFSRINSFLDDLQSNSWQLDKFRSLCEKFGFEFVCSKFDLSRYSTATVSLQTFLNLRPIIEEYQSSIQIEKFNEIDFQIIDYLLITLNSINRILKFFTSSKSLNFTYVLFAIMSIEKHLLSTLGSLQFQRLIAPFETFLSKIQEFKTILFSDDMNLLAMFLCPAILFEREVLEYSFHTISLSEIVDKLSTSIFSLLKRFLNLHTIGNVNNSHNTSNHSNMNIHTDNQTNNINNRSGNNSDNNDNEHDNDNDNHSNSNTPASRIDIDPTGGENSVLPEQQPQNSNNNLSFGSLSDTHHLSDSTISKEIDSIFLQIIQEDLYDYLSTVNSIVPISYRSYCEQSNFIRDSGRFKKRIITEDSIIGELEQPMNFIEELLDIHVPVCNAFWSQYLDNDAGPIIRILFKIMQCQSSSSIRGEYSFLNDFIPRVHPDLTQEIIKIKLFNDQFVASKVDYDLDTLQTASQYLP.

Residues 1–10 (MRAMDTQVQS) show a composition bias toward polar residues. Residues 1-54 (MRAMDTQVQSAERGLVLPPMNSTVSSATAATTATNTDTDTDGDRDEERESLAED) form a disordered region. The N-linked (GlcNAc...) asparagine glycan is linked to Asn-21. Low complexity predominate over residues 27–37 (ATAATTATNTD). The BED-type zinc finger occupies 66–122 (RDRSRYLGHFLGVDKMLEAVKCKYCGVIIRRQGNSISMAEASQTHLWSTHKIDPNAN). Positions 87, 90, 110, and 115 each coordinate Zn(2+). Asn-242 and Asn-291 each carry an N-linked (GlcNAc...) asparagine glycan. Residues 381-401 (YYHNCIISIINSAILPLFGTP) form a helical membrane-spanning segment. N-linked (GlcNAc...) asparagine glycans are attached at residues Asn-540, Asn-645, Asn-649, Asn-652, Asn-662, Asn-669, Asn-673, Asn-688, and Asn-722. Low complexity predominate over residues 646–677 (NSHNTSNHSNMNIHTDNQTNNINNRSGNNSDN). Residues 646-727 (NSHNTSNHSN…NSNNNLSFGS (82 aa)) form a disordered region. The span at 679 to 688 (DNEHDNDNDN) shows a compositional bias: basic and acidic residues. The span at 718 to 727 (NSNNNLSFGS) shows a compositional bias: low complexity.

The protein belongs to the VID22 family. In terms of processing, glycosylated.

It localises to the cell membrane. The protein resides in the nucleus. Has a role in the negative regulation of gluconeogenesis. Imports fructose-1,6-bisphosphatase (FBPase) into the intermediate vacuole import and degradation (Vid) vesicles. This is an indirect role and requires cyclophilin A. The sequence is that of Vacuolar import and degradation protein 22 (VID22) from Saccharomyces cerevisiae (strain ATCC 204508 / S288c) (Baker's yeast).